A 383-amino-acid chain; its full sequence is MSATTTSASETSTPTCLPIPPKENGYVPPGGCGNIHMYEASFAAPVLFSVLFGLTTIIHIVQAIMFKKRYAWVVIMSSLWELIAFIMRSLFAKNQSSDAYNTPFTIFFLLAPIWVNAFLYMTLGRLIYFFLPSGRLGGIGAKRFGHIFVWLEILAFIIQLVGAAFTTDTEASQETIMRGVHIYMGGIGVQELFILIFTGLFIHLQRKMGEMERHGTLDAEKVGRGSMPWRWLFYAIYASLFLITVRIIFRLAQYADGTNIDNPALRNEWFEYVWDAAPIFICLAILNVAHPGRVLVGPDSEFPRVSRKEKKQRKREKKEAKIAEKEAKKERKRRRKHGSIGVDLLDAQERGSAPTSRPAPGGHGYQGENQRTWYDNRGNEVRP.

2 helical membrane passes run 46–66 (VLFS…AIMF) and 71–91 (AWVV…RSLF). The N-linked (GlcNAc...) asparagine glycan is linked to Asn94. 5 helical membrane-spanning segments follow: residues 104 to 124 (FTIF…MTLG), 144 to 164 (FGHI…VGAA), 182 to 202 (IYMG…GLFI), 231 to 251 (WLFY…IFRL), and 269 to 289 (WFEY…LNVA). The segment at 305–383 (VSRKEKKQRK…YDNRGNEVRP (79 aa)) is disordered. Basic residues predominate over residues 307 to 316 (RKEKKQRKRE). The span at 317–329 (KKEAKIAEKEAKK) shows a compositional bias: basic and acidic residues.

The protein belongs to the lipid-translocating exporter (LTE) (TC 9.A.26.1) family.

It is found in the membrane. It functions in the pathway secondary metabolite biosynthesis. Its function is as follows. Probable lipid transporter; part of the gene cluster that mediates the biosynthesis of aspercryptins, linear lipopeptides built from six amino acids including 2 highly unusual and nonproteogenic amino acids, 2-amino-octanoic acid (2aoa) and 2-amino-dodecanol (2adol). The core structure of aspercryptins is as follows: Ser/Ala-Thr-Ile/Val-2aoa-Asn-2adol. The first step of aspercryptin biosynthesis is the generation of the fatty acid precursors, octanoic and dodecanoic acids, by the FAS subunits atnF and atnM. The fatty acid precursors are likely transformed into the corresponding alpha-amino fatty acids in three steps. First, they are hydroxylated by the cytochrome P450 monooxygenase atnE, then oxidized to the corresponding alpha-keto acids by the NAD(P)-dependent oxidoreductase atnD, and finally converted to the alpha-amino fatty acids by the PLP-dependent aminotransferases atnH or atnJ. the alpha-amino fatty acids, 2-amino-octanoic and 2-amino-dodecanoic acids, are recognized, activated, and covalently tethered to the NRPS atnA by its fourth and sixth adenylation domains. The second module of atnA is the Thr module and contains an epimerase (E) domain responsible for the epimerization of Thr to D-allo-Thr. Additionally, despite atnA having only one epimerase domain, the first amino acid of aspercryptin A1 is D-Ser, suggesting that serine is either loaded directly as D-Ser on the first module or that the epimerase domain in the threonine module epimerizes both L-Ser and L-Thr. After condensation of the hexapeptide of aspercryptin, the C-terminal reductase (TE) domain might be involved in the reductive release and production of the aldehyde hexapeptide. Further reduction would generate aspercryptins. The variety of aspercryptins produced reflects the flexibility of the atnA NRPS, allowing incorporation of alanine instead of serine, valine for isoleucine, and a C10 fatty amino alcohol instead of the C12 version. AtnB seems to be involved in the selectivity for Ile versus Val by the third module. Moreover, type B, C and D aspercryptins have an additional N-terminal cichorine, acetyl and propionyl group respectively. The sequence is that of Probable lipid transporter atnI from Emericella nidulans (strain FGSC A4 / ATCC 38163 / CBS 112.46 / NRRL 194 / M139) (Aspergillus nidulans).